We begin with the raw amino-acid sequence, 618 residues long: MTKKLPSELKQTRKSIQTACEFCHTKHIQCDVGRPCQNCLKRNIGKFCRDKKRKSRKRIEKHGTQPYLNLGKRLVIHDVPSKTVSPSSVHLQRDFLSSDQEKPGKTPAHNTNIQYTYNINDNFQSAGSIPRITNFNTNNGQTVLENTSNNISASQAVHLMNDPIIPTVRKSTLNLKSHFLEQHKAMQQPLATNCLVATSNVPVHSGMDDSNKSDDDVDDETNIHFDSMWCNDEYMKLKDIVDISTPFLPNNSQIFSLQESEYPNPSASTRGNSSLHLTNLLNSTKSVNDQKDSSIGHSTSTFNTYDEVVSRPFISLDMLHLNRGANANTQPSHNAKLESECDSSSHSDADLEKHDTDFISPSKFRELVKTPQDLYDNKCLIKLHNYKLAYTKLLTTLRKKFLEGAEIDKSASVKDEHSTQKHNLRYDLEVIIRSILERYAPIFISLTSNMIEEDLLLQEVTLQRALLDLENMAKLVSCTPMCIWRRSGEICFVSNEFYSLTGFNKNLLLDRTSFIFEYLDHKSVSNYFQIFNELLAFGYNDINKRKKLLMLNACSSTSSKITEGFSFTTDGKAIFTKCNLLLSNGLYLKCACCWTVKRDSFNIPILVMGQFLPIFEMD.

The segment at residues 20-48 is a DNA-binding region (zn(2)-C6 fungal-type); it reads CEFCHTKHIQCDVGRPCQNCLKRNIGKFC. The tract at residues 325-353 is disordered; sequence ANANTQPSHNAKLESECDSSSHSDADLEK. Over residues 335 to 353 the composition is skewed to basic and acidic residues; that stretch reads AKLESECDSSSHSDADLEK. The PAS domain occupies 466 to 538; sequence LLDLENMAKL…QIFNELLAFG (73 aa).

Belongs to the ERT1/acuK family.

The protein resides in the nucleus. Its function is as follows. Transcription factor which regulates nonfermentable carbon utilization. Binds specifically to 5'-CGGN(8)CGG-3' and 5'-CGGN(9)CGG-3' sequences in the promoter region. This Saccharomyces cerevisiae (strain JAY291) (Baker's yeast) protein is Glucose starvation modulator protein 1 (GSM1).